A 226-amino-acid polypeptide reads, in one-letter code: MGNCVKSPLRNLSRKMRQEETSYTVVQTSEEGLAASGELPGPLLMLAQNCAVMHNLLGPACIFLRKGFAENRQPDRSLRPEEIEELREAFREFDKDKDGYINCRDLGNCMRTMGYMPTEMELIELSQQINMNLGGHVDFDDFVELMGPKLLAETADMIGVKELRDAFREFDTNGDGEISTSELREAMRKLLGHQVGHRDIEEIIRDVDLNGDGRVDFEEFVRMMSR.

Gly2 is lipidated: N-myristoyl glycine. A lipid anchor (S-palmitoyl cysteine) is attached at Cys4. 4 consecutive EF-hand domains span residues 81–116 (EEIEELREAFREFDKDKDGYINCRDLGNCMRTMGYM), 135–152 (GHVDFDDFVELMGPKLLA), 158–193 (IGVKELRDAFREFDTNGDGEISTSELREAMRKLLGH), and 195–226 (VGHRDIEEIIRDVDLNGDGRVDFEEFVRMMSR). Ca(2+) contacts are provided by Asp94, Asp96, Asp98, Tyr100, and Asp105. 4 residues coordinate Ca(2+): Asp171, Asn173, Asp175, and Glu177. The residue at position 179 (Ser179) is a Phosphoserine. Positions 182, 208, 210, 212, 214, and 219 each coordinate Ca(2+).

In terms of assembly, homodimer. Interacts (via C-terminus) with ITPR1, ITPR2 and ITPR3. This binding is calcium dependent and the interaction correlates with calcium concentration. An additional calcium-independent interaction with the N-terminus of ITPR1 results in a decreased InsP(3) binding to the receptor. Interacts with CACNA1A (via C-terminal CDB motif) in the pre- and postsynaptic membranes. Interacts with CACNA1C (via C-terminal C and IQ motifs). Interacts with CACNA1D. The binding to the C motif is calcium independent whereas the binding to IQ requires the presence of calcium and is mutually exclusive with calmodulin binding. Interacts with TRPC5 (via C-terminus). Interacts (via EF-hands 1 and 2) at microtubules with MAP1LC3B. Interacts with MYO1C. Interacts (via EF-hands 1 and 2) with NSMF (via the central NLS-containing motif region), the interaction occurs in a calcium dependent manner after synaptic NMDA receptor stimulation and prevents nuclear import of NSMF. Interacts with SPACA9. In terms of processing, phosphorylated. The phosphorylation regulates the activity.

It is found in the cytoplasm. It localises to the cytoskeleton. Its subcellular location is the perinuclear region. The protein localises to the cell membrane. The protein resides in the golgi apparatus. It is found in the postsynaptic density. Functionally, modulates calcium-dependent activity of inositol 1,4,5-triphosphate receptors (ITPRs). Inhibits agonist-induced intracellular calcium signaling. Enhances inactivation and does not support calcium-dependent facilitation of voltage-dependent P/Q-type calcium channels. Causes calcium-dependent facilitation and inhibits inactivation of L-type calcium channels by binding to the same sites as calmodulin in the C-terminal domain of CACNA1C, but has an opposite effect on channel function. Suppresses the calcium-dependent inactivation of CACNA1D. Inhibits TRPC5 channels. Prevents NMDA receptor-induced cellular degeneration. Required for the normal transfer of light signals through the retina. The chain is Calcium-binding protein 1 (CABP1) from Bos taurus (Bovine).